The sequence spans 339 residues: DNA-directed RNA polymerase subunit alpha (339 aa).

Residues 1 to 235 (MTIQKNWQEL…DQLNVFVNFE (235 aa)) form an alpha N-terminal domain (alpha-NTD) region. Positions 251-339 (FNPAFLKKVD…ELAKRFEDHY (89 aa)) are alpha C-terminal domain (alpha-CTD).

This sequence belongs to the RNA polymerase alpha chain family. Homodimer. The RNAP catalytic core consists of 2 alpha, 1 beta, 1 beta' and 1 omega subunit. When a sigma factor is associated with the core the holoenzyme is formed, which can initiate transcription.

It catalyses the reaction RNA(n) + a ribonucleoside 5'-triphosphate = RNA(n+1) + diphosphate. Its function is as follows. DNA-dependent RNA polymerase catalyzes the transcription of DNA into RNA using the four ribonucleoside triphosphates as substrates. The chain is DNA-directed RNA polymerase subunit alpha from Rhodopseudomonas palustris (strain ATCC BAA-98 / CGA009).